Consider the following 761-residue polypeptide: Ribonucleoside-diphosphate reductase 1 subunit alpha (761 aa).

The region spanning 5–95 (LLVTKRDGRT…IFHLRKKAFG (91 aa)) is the ATP-cone domain. Residues Lys-9, 15–21 (ERINLDK), Thr-55, and Lys-91 contribute to the ATP site. Thr-209 contributes to the GDP binding site. Cys-225 and Cys-462 are disulfide-bonded. DTTP-binding positions include 232 to 234 (DSL), Arg-262, and Arg-269. Asn-437 provides a ligand contact to GDP. The active-site Proton acceptor is the Asn-437. Cys-439 functions as the Cysteine radical intermediate in the catalytic mechanism. Residues Glu-441 and 623-625 (ETS) each bind GDP. Glu-441 functions as the Proton acceptor in the catalytic mechanism.

The protein belongs to the ribonucleoside diphosphate reductase large chain family. Tetramer of two alpha (R1) and two beta (R2) subunits. The B1 protein is a dimer of alpha subunits. A radical transfer pathway occurs between 'Tyr-122' of R2 and R1.

The catalysed reaction is a 2'-deoxyribonucleoside 5'-diphosphate + [thioredoxin]-disulfide + H2O = a ribonucleoside 5'-diphosphate + [thioredoxin]-dithiol. With respect to regulation, under complex allosteric control mediated by deoxynucleoside triphosphates and ATP binding to separate specificity and activation sites on the alpha subunit. The type of nucleotide bound at the specificity site determines substrate preference. It seems probable that ATP makes the enzyme reduce CDP and UDP, dGTP favors ADP reduction and dTTP favors GDP reduction. Stimulated by ATP and inhibited by dATP binding to the activity site. Its function is as follows. Provides the precursors necessary for DNA synthesis. Catalyzes the biosynthesis of deoxyribonucleotides from the corresponding ribonucleotides. R1 contains the binding sites for both substrates and allosteric effectors and carries out the actual reduction of the ribonucleotide. The polypeptide is Ribonucleoside-diphosphate reductase 1 subunit alpha (nrdA) (Salmonella typhimurium (strain LT2 / SGSC1412 / ATCC 700720)).